The chain runs to 215 residues: tRNA (guanine-N(7)-)-methyltransferase (215 aa).

Positions 43, 68, 95, and 121 each coordinate S-adenosyl-L-methionine. The active site involves D121. Substrate contacts are provided by K125 and D157.

The protein belongs to the class I-like SAM-binding methyltransferase superfamily. TrmB family.

It carries out the reaction guanosine(46) in tRNA + S-adenosyl-L-methionine = N(7)-methylguanosine(46) in tRNA + S-adenosyl-L-homocysteine. It functions in the pathway tRNA modification; N(7)-methylguanine-tRNA biosynthesis. Catalyzes the formation of N(7)-methylguanine at position 46 (m7G46) in tRNA. The chain is tRNA (guanine-N(7)-)-methyltransferase from Trichormus variabilis (strain ATCC 29413 / PCC 7937) (Anabaena variabilis).